Reading from the N-terminus, the 497-residue chain is MTSLTQFEQLKTAGYNTIPVYRQRLADTDTPLSVFARLKDYTQAYLFESVEGGENWARYSIIGLGESTVFSCNAGQLTIKNAQGNITTQSCADPFQYIRDYQSQFKVPPHALIPDLPQFTGGLVGYFGYDAVRYIEPRLSNVPEADPVGLPDIWMMLSKTVIIFDNLKDTLFLIVHANTTDEEAYQRAQNQLDYLERLLATPVSLQAKKHKAPHFESLTGKEKFLESVETVKEYIRAGDVMQVVPGHRMVSDFDGDPLQVYRALRHLNPSPYLFLVQGHTLTDNTPFHIVGSSPEILSRLEDGIATVRPLAGTRPRGKTKEEDLALEQELLADEKEIAEHLMLIDLGRNDVGRVSKIGKVQVTDRMVIERYSHVMHIVSNVQGEVRDDIDALDVFKATFPAGTLSGAPKIRAMEIIDEVEPVKRGIFGGAVGYLGWHGEMDMSIAIRTCVIRENKVYVQAGAGLVADSNPESEWNETQIKARAVIKAVELSSNGLIL.

L-tryptophan contacts are provided by residues S49 and P271 to L273. G312–T313 lines the chorismate pocket. Residue E339 coordinates Mg(2+). Residues R447, G461–G463, and G463 contribute to the chorismate site. A Mg(2+)-binding site is contributed by E476.

The protein belongs to the anthranilate synthase component I family. As to quaternary structure, heterotetramer consisting of two non-identical subunits: a beta subunit (TrpG) and a large alpha subunit (TrpE). Requires Mg(2+) as cofactor.

The enzyme catalyses chorismate + L-glutamine = anthranilate + pyruvate + L-glutamate + H(+). Its pathway is amino-acid biosynthesis; L-tryptophan biosynthesis; L-tryptophan from chorismate: step 1/5. Its activity is regulated as follows. Feedback inhibited by tryptophan. Functionally, part of a heterotetrameric complex that catalyzes the two-step biosynthesis of anthranilate, an intermediate in the biosynthesis of L-tryptophan. In the first step, the glutamine-binding beta subunit (TrpG) of anthranilate synthase (AS) provides the glutamine amidotransferase activity which generates ammonia as a substrate that, along with chorismate, is used in the second step, catalyzed by the large alpha subunit of AS (TrpE) to produce anthranilate. In the absence of TrpG, TrpE can synthesize anthranilate directly from chorismate and high concentrations of ammonia. The protein is Anthranilate synthase component 1 (trpE) of Acinetobacter calcoaceticus.